A 1322-amino-acid chain; its full sequence is WD repeat-containing protein 17 (1322 aa).

WD repeat units lie at residues 81-121 (EHKK…VIAK), 123-164 (DSTK…SGVI), 171-211 (SFLS…QKHV), 221-261 (DEED…CITT), and 266-307 (SAAA…PIDN). Residues 328-352 (KFSVQSPTKNHYTSSTSEAVPPPTL) are disordered. Residues 330 to 345 (SVQSPTKNHYTSSTSE) show a composition bias toward polar residues. 7 WD repeats span residues 391-431 (GHVE…AVYT), 434-474 (GNEG…IIQR), 478-518 (HGTN…LHKY), 519-559 (KHPA…DQPL), 564-604 (GHTA…CINI), 607-647 (GHTA…CVDT), and 650-690 (DHGA…TPVQ).

The chain is WD repeat-containing protein 17 (WDR17) from Homo sapiens (Human).